The following is a 248-amino-acid chain: Probable septum site-determining protein MinC (248 aa).

The tract at residues 94–125 is disordered; it reads GMPPAMRGGQPAADFEAPAGEPQANPGAPEPQ.

This sequence belongs to the MinC family. As to quaternary structure, interacts with MinD and FtsZ.

Functionally, cell division inhibitor that blocks the formation of polar Z ring septums. Rapidly oscillates between the poles of the cell to destabilize FtsZ filaments that have formed before they mature into polar Z rings. Prevents FtsZ polymerization. This is Probable septum site-determining protein MinC from Brucella abortus (strain S19).